A 444-amino-acid chain; its full sequence is Homogentisate 1,2-dioxygenase (444 aa).

The tract at residues 92 to 111 (GDSADVPPTPPNQLRWDPLP) is disordered. Histidine 298 serves as the catalytic Proton acceptor. Fe cation contacts are provided by histidine 341 and glutamate 347. 2 residues coordinate homogentisate: tyrosine 356 and histidine 377. Histidine 377 lines the Fe cation pocket.

The protein belongs to the homogentisate dioxygenase family. In terms of assembly, hexamer; dimer of trimers. Fe cation is required as a cofactor.

The catalysed reaction is homogentisate + O2 = 4-maleylacetoacetate + H(+). It functions in the pathway amino-acid degradation; L-phenylalanine degradation; acetoacetate and fumarate from L-phenylalanine: step 4/6. Functionally, involved in the catabolism of homogentisate (2,5-dihydroxyphenylacetate or 2,5-OH-PhAc), a central intermediate in the degradation of phenylalanine and tyrosine. Catalyzes the oxidative ring cleavage of the aromatic ring of homogentisate to yield maleylacetoacetate. This Burkholderia vietnamiensis (strain G4 / LMG 22486) (Burkholderia cepacia (strain R1808)) protein is Homogentisate 1,2-dioxygenase.